The sequence spans 226 residues: Transmembrane protein 204 (226 aa).

Residues 1–5 are Cytoplasmic-facing; that stretch reads MTVQK. The chain crosses the membrane as a helical span at residues 6 to 26; sequence LVATAVLVALVSLILNNAAAF. Over 27 to 103 the chain is Extracellular; sequence TPNWVYQTLE…LQFDMMRACN (77 aa). A helical membrane pass occupies residues 104–124; sequence LVATAALAVGQITFILGLTGL. Residues 125-136 lie on the Cytoplasmic side of the membrane; the sequence is PLMSPESQCWEE. Residues 137–157 traverse the membrane as a helical segment; the sequence is AMAAAFQLASFVLVIGLVTFY. Over 158-170 the chain is Extracellular; it reads RIGPYTNLSWSCY. The N-linked (GlcNAc...) asparagine glycan is linked to Asn-164. The helical transmembrane segment at 171–191 threads the bilayer; the sequence is LNIGACLLATLAAAMLIWNIL. Residues 192 to 226 lie on the Cytoplasmic side of the membrane; it reads HRREDCMAPRVIVISRSLTARFRRGLDNDYVESPC.

It is found in the cell junction. The protein localises to the adherens junction. Its subcellular location is the cell membrane. Its function is as follows. Can influence paracellular permeability. Appears to be involved in cell-cell interactions through adherens. In Rattus norvegicus (Rat), this protein is Transmembrane protein 204 (Tmem204).